The chain runs to 417 residues: RH-like protein IA (417 aa).

The next 11 helical transmembrane spans lie at 12–32 (CLPLCALTLEAALILLFYFFT), 44–64 (LVASYQVGQDLTVMAAIGFGF), 77–97 (VAFSLFMLALGVQWAILLDGF), 125–145 (ISVDAVLGKVNLVQLVVMVLV), 172–192 (IYVFAAYFGLSVAWCLPKPLP), 203–223 (TIPSLSAMLGALFLWMFWPSF), 238–258 (VFNTYYAVAVSVVTAISGSSL), 265–285 (ISMSYMHNAVLAGGVAVGTSC), 287–307 (LITSPWLAMVLGLVAGLISIG), 331–351 (NFSLLGLLGEIIYIVLLVHHT), and 358–378 (MIGFQVLLRIGEFSLATTIAL).

The protein belongs to the ammonium transporter (TC 2.A.49) family. Rh subfamily.

It is found in the membrane. Its function is as follows. May be part of an oligomeric complex which is likely to have a transport or channel function in the erythrocyte membrane. The polypeptide is RH-like protein IA (Pan troglodytes (Chimpanzee)).